The following is a 177-amino-acid chain: Interleukin-1 receptor antagonist protein (177 aa).

The N-terminal stretch at 1–25 (MEICRGLRSHLITLLLFLFHSETIC) is a signal peptide. A disulfide bridge connects residues Cys91 and Cys141. Asn109 carries an N-linked (GlcNAc...) asparagine glycan.

This sequence belongs to the IL-1 family. In terms of tissue distribution, the intracellular form of IL1RN is predominantly expressed in epithelial cells.

It is found in the secreted. It localises to the cytoplasm. In terms of biological role, anti-inflammatory antagonist of interleukin-1 family of proinflammatory cytokines such as interleukin-1beta/IL1B and interleukin-1alpha/IL1A. Protects from immune dysregulation and uncontrolled systemic inflammation triggered by IL1 for a range of innate stimulatory agents such as pathogens. The sequence is that of Interleukin-1 receptor antagonist protein (IL1RN) from Homo sapiens (Human).